A 74-amino-acid polypeptide reads, in one-letter code: Putative membrane protein insertion efficiency factor (74 aa).

The protein belongs to the UPF0161 family.

It localises to the cell inner membrane. Could be involved in insertion of integral membrane proteins into the membrane. The chain is Putative membrane protein insertion efficiency factor from Blochmanniella floridana.